Here is a 934-residue protein sequence, read N- to C-terminus: Oxysterol-binding protein-related protein 6 (934 aa).

Positions 1–62 (MSSDEKGISP…RQLLEPEPVP (62 aa)) are disordered. An N-acetylserine modification is found at serine 2. Residues 14-29 (TSTPTHRSASSSTSSQ) show a composition bias toward low complexity. The segment covering 30–40 (RDSRQSIHILE) has biased composition (basic and acidic residues). Serine 35 carries the phosphoserine modification. Polar residues predominate over residues 42–53 (TASSSTEPSVSR). Residues 86 to 181 (PDKHEGFMLK…WVSKLRHHRL (96 aa)) enclose the PH domain. Residues serine 190 and serine 290 each carry the phosphoserine modification.

Belongs to the OSBP family. In terms of assembly, homodimer. Interacts with OSBPL3. Expressed in brain and striated muscle (at protein level). Widely expressed. Expressed in skeletal muscle.

The protein resides in the cytoplasm. It is found in the cytosol. Its subcellular location is the endoplasmic reticulum membrane. The protein localises to the nucleus envelope. It localises to the cell membrane. The protein resides in the endosome membrane. Its function is as follows. Regulates cellular transport and efflux of cholesterol. Plays a role in phosphatidylinositol-4-phophate (PI4P) turnover at the neuronal membrane. Binds via its PH domain PI4P, phosphatidylinositol-4,5-diphosphate, phosphatidylinositol-3,4,5-triphosphate, and phosphatidic acid. Weakly binds 25-hydroxycholesterol. In Homo sapiens (Human), this protein is Oxysterol-binding protein-related protein 6 (OSBPL6).